The following is a 1045-amino-acid chain: MKMLQGRLPLTVLHLFLLLGGGMTQQRPQGPIKDINGLPAQGPTVSVRPGPDPSDKVTFQDCPVDIFFVLDTSESVALRVKPFKTLVTQVKEFTKKFIDKLTSRYYRCDRNLVWNAGALHYSDEVILINSLTRDMKTLRDNVETVEYIGKGTHTDCAIKRGIEEVLIGGSHQKENKYLIVVTDGHPLEGYKEPCGGLEDAANEAKHLGIKVFSVAISPNHLEPRLSVIASDASHRRNFTATSAVGLTDDEIDNTIDTIIDMIKENAEQGCCTYECKPSRGLSGPSGPPGYEGEIGKPGLPGDRGLPGDPGRQGDIGPVGYQGMKGDQGIRGEKGGRGAKGSKGDKGKRGIDGVDGQKGEDGYNGLPGCKGSPGFDGAPGSSGPKGDPGPYGTKGEKGVPGTPGTGGRPGNTGNTGDKGDPGSNGLAGEKGESGDEGDAGADGSPGKRGEAGELGPPGVSGGRGARGEKGEPGPPGDQGRDGPAGPFGDPGEAGPQGPKGYRGDEGPRGPEGPKGPRGAKGLPGEQGIAGERGDDGRPGNGTDGFPGFQGYPGSRGDPGSNGTKGYPGPKGDEGEQGEPGDDNVSPGPPGPKGAKGYRGPEGPPGPPGPGGPPGPDECEILDIIKRMCSCCECTCGPLDLLFVLDSSESIGLSNFQISKDFILKVIDRLSRDEHVKFDADNSHVGVVQYSHGQTQEVVAMGDSSIQSIGQLKEAVKNLKWIAGGTWTGEALAFTKDNLLKRFTLEKKIALVLTDGHSDILRDKTPLNTLCEVTPVVSVGVGDIFQNAPNSDQLVQISCGGKPYSKGLSLQRTSFAELLDDGFLHNVTSHMCSDRKCPDYTCPITYEGPADITMLVDSSTRVGNQHFQTSKSFVKLLAERFLKAKPPPSGSARVSVVQYSGQNQQIVEAQFLTNYTVLEVPVDNMQFINGATNVVSALRAVTELYREDSLAGVNKKLLVFSDGNTQEEKGLLKVVQDAQSAGIEIYVLAVGSRLNYPNLQVMLTGSAADIAGPFPEERLFRVPDYTSLLQGVRYQSISRRIALKSSQ.

The signal sequence occupies residues 1-24 (MKMLQGRLPLTVLHLFLLLGGGMT). Residues 65 to 255 (DIFFVLDTSE…LTDDEIDNTI (191 aa)) form the VWFA 1 domain. Residues 277–613 (PSRGLSGPSG…GPPGPGGPPG (337 aa)) form a disordered region. Residues 280-540 (GLSGPSGPPG…RGDDGRPGNG (261 aa)) are triple-helical region. A compositionally biased stretch (low complexity) spans 297-309 (PGLPGDRGLPGDP). Residues 327–360 (QGIRGEKGGRGAKGSKGDKGKRGIDGVDGQKGED) are compositionally biased toward basic and acidic residues. Residues 375 to 392 (DGAPGSSGPKGDPGPYGT) show a composition bias toward low complexity. The segment covering 400–409 (GTPGTGGRPG) has biased composition (gly residues). Short sequence motifs (cell attachment site) lie at residues 501-503 (RGD) and 554-556 (RGD). Residues 600 to 613 (EGPPGPPGPGGPPG) show a composition bias toward pro residues. VWFA domains follow at residues 638 to 825 (DLLF…LHNV) and 849 to 1035 (DITM…YQSI).

The protein belongs to the type VI collagen family.

The protein resides in the secreted. It localises to the extracellular space. Its subcellular location is the extracellular matrix. In terms of biological role, collagen VI acts as a cell-binding protein. This is Collagen alpha-1(VI) chain (col6a1) from Xenopus laevis (African clawed frog).